A 202-amino-acid polypeptide reads, in one-letter code: Dephospho-CoA kinase (202 aa).

The DPCK domain maps to 4 to 202 (FLGLTGGIAT…EGVCHKSGMS (199 aa)). 12–17 (ATGKTT) contributes to the ATP binding site.

It belongs to the CoaE family.

It localises to the cytoplasm. It carries out the reaction 3'-dephospho-CoA + ATP = ADP + CoA + H(+). It functions in the pathway cofactor biosynthesis; coenzyme A biosynthesis; CoA from (R)-pantothenate: step 5/5. Its function is as follows. Catalyzes the phosphorylation of the 3'-hydroxyl group of dephosphocoenzyme A to form coenzyme A. The chain is Dephospho-CoA kinase from Latilactobacillus sakei subsp. sakei (strain 23K) (Lactobacillus sakei subsp. sakei).